A 654-amino-acid polypeptide reads, in one-letter code: Protein fem-1 homolog A-like (654 aa).

ANK repeat units follow at residues D2–L31, G40–A70, E82–R111, T115–V145, H149–R178, K182–R211, and Y214–Q243. Phosphoserine is present on S108. Residues H241 to P265 are disordered. Positions G253 to S263 are enriched in polar residues. TPR repeat units follow at residues V283–G317 and S375–N408. ANK repeat units follow at residues N519–S561 and D565–A594. Residue S608 is modified to Phosphoserine.

It belongs to the fem-1 family. In terms of assembly, component of a CRL2 E3 ubiquitin-protein ligase complex, also named ECS (Elongin BC-CUL2/5-SOCS-box protein) complex, composed of CUL2, Elongin BC (ELOB and ELOC), RBX1 and substrate-specific adapter FEM1A.

The protein localises to the mitochondrion. Its subcellular location is the cytoplasm. The protein operates within protein modification; protein ubiquitination. Its function is as follows. Substrate-recognition component of a Cul2-RING (CRL2) E3 ubiquitin-protein ligase complex of the DesCEND (destruction via C-end degrons) pathway, which recognizes a C-degron located at the extreme C terminus of target proteins, leading to their ubiquitination and degradation. The C-degron recognized by the DesCEND pathway is usually a motif of less than ten residues and can be present in full-length proteins, truncated proteins or proteolytically cleaved forms. The CRL2(FEM1A) complex specifically recognizes proteins with an arginine at the C-terminus: recognizes and binds proteins ending with -Lys/Arg-Xaa-Arg and -Lys/Arg-Xaa-Xaa-Arg C-degrons, such as SIL1 or OR51B2, leading to their ubiquitination and degradation. This Mus musculus (Mouse) protein is Protein fem-1 homolog A-like.